Here is a 536-residue protein sequence, read N- to C-terminus: Proto-oncogene tyrosine-protein kinase Src (536 aa).

Residues 1-53 (MGSNKSKPKDASQRRRSLEPAENVHGAGGGAFPASQTPSKPASADGHRGPSAA) form a disordered region. Gly-2 carries N-myristoyl glycine lipidation. Residues 7-19 (KPKDASQRRRSLE) are compositionally biased toward basic and acidic residues. Position 17 is a phosphoserine (Ser-17). The residue at position 75 (Ser-75) is a Phosphoserine; by CDK5. One can recognise an SH3 domain in the interval 84-145 (GGVTTFVALY…PSNYVAPSDS (62 aa)). The region spanning 151-248 (WYFGKITRRE…GLCHRLTTVC (98 aa)) is the SH2 domain. Tyr-187 bears the Phosphotyrosine mark. The Protein kinase domain maps to 270-523 (LRLEVKLGQG…YLQAFLEDYF (254 aa)). ATP contacts are provided by residues 276-284 (LGQGCFGEV) and Lys-298. The active-site Proton acceptor is the Asp-389. Position 419 is a phosphotyrosine; by autocatalysis (Tyr-419). Tyr-419 carries the phosphotyrosine; by FAK2 modification. Tyr-530 is modified (phosphotyrosine; by CSK).

The protein belongs to the protein kinase superfamily. Tyr protein kinase family. SRC subfamily. As to quaternary structure, part of a complex comprised of PTPRA, BCAR1, BCAR3 (via SH2 domain) and SRC; the formation of the complex is dependent on integrin mediated-tyrosine phosphorylation of PTPRA. Interacts with DDEF1/ASAP1; via the SH3 domain. Interacts with CCPG1. Identified in a complex containing FGFR4, NCAM1, CDH2, PLCG1, FRS2, SRC, SHC1, GAP43 and CTTN. Interacts with ERBB2, STAT1 and PNN. Interacts with DDR1, DDR2 and DAB2. Interacts with CDCP1, TGFB1I1 and TOM1L2. Interacts with the cytoplasmic domain of MUC1, phosphorylates it and increases binding of MUC1 with beta-catenin. Interacts with RALGPS1; via the SH3 domain. Interacts with CAV2 (tyrosine phosphorylated form). Interacts (via the SH3 domain and the protein kinase domain) with ARRB1; the interaction is independent of the phosphorylation state of SRC C-terminus. Interacts with ARRB1 and ARRB2. Interacts with SRCIN1. Interacts with NDFIP2 and more weakly with NDFIP1. Interacts with PIK3CA and/or PIK3C2B, PTK2/FAK1 and ESR1 (dimethylated on arginine). Interacts with FASLG. Interacts (via SH2 domain) with the 'Tyr-402' phosphorylated form of PTK2B/PYK2. Interacts (via SH2 domain) with FLT3 (tyrosine phosphorylated). Interacts with PDGFRA (tyrosine phosphorylated). Interacts with CSF1R. Interacts (via SH2 and SH3 domain) with TNK2. Interacts (via protein kinase domain) with the tyrosine phosphorylated form of RUNX3 (via runt domain). Interacts with TRAF3 (via RING-type zinc finger domain). Interacts with RIGI, MAVS and TBK1. Interacts (via SH2 domain) with RACK1; the interaction is enhanced by tyrosine phosphorylation of RACK1 and inhibits SRC activity. Interacts with EPHB1; activates the MAPK/ERK cascade to regulate cell migration. Interacts with FCAMR. Interacts (via SH2 domain) with the 'Tyr-9' phosphorylated form of PDPK1. Interacts with AMOTL2; this interaction regulates the translocation of phosphorylated SRC to peripheral cell-matrix adhesion sites. Interacts with TRAP1. Interacts with CBLC; the interaction is enhanced when SRC is phosphorylated at Tyr-419. Interacts with ARHGEF5. Interacts (via cytoplasmic domain) with CEACAM1 (via SH2 domain); this interaction is regulated by trans-homophilic cell adhesion. Interacts with MPP2. Interacts with PRR7. Interacts (via kinase domain and to a lesser extent the SH2 domain) directly with PDLIM4; this interaction results in PTPN13-mediated dephosphorylation of this protein leading to its inactivation. Interacts with P85 (PIK3R1 or PIK3R2). Interacts with HNRNPA2B1. Interacts with IL6ST/gp130. Interacts (via SH3 domain) with PELP1 in the presence of 17-beta-estradiol. Interacts with AMBRA1. (Microbial infection) Interacts with HEV ORF3 protein; via the SH3 domain. In terms of assembly, (Microbial infection) Interacts (via SH2 domain) with HCV non-structural protein 5A (via N-terminus). Myristoylated at Gly-2, and this is essential for targeting to membranes. In terms of processing, dephosphorylated at Tyr-530 by PTPRJ. Phosphorylated on Tyr-530 by c-Src kinase (CSK). The phosphorylated form is termed pp60c-src. Dephosphorylated by PTPRJ at Tyr-419. Normally maintained in an inactive conformation with the SH2 domain engaged with Tyr-530, the SH3 domain engaged with the SH2-kinase linker, and Tyr-419 dephosphorylated. Dephosphorylation of Tyr-530 as a result of protein tyrosine phosphatase (PTP) action disrupts the intramolecular interaction between the SH2 domain and Tyr-530, Tyr-419 can then become autophosphorylated, resulting in SRC activation. Phosphorylation of Tyr-530 by CSK allows this interaction to reform, resulting in SRC inactivation. CDK5-mediated phosphorylation at Ser-75 targets SRC to ubiquitin-dependent degradation and thus leads to cytoskeletal reorganization. Phosphorylated by PTK2/FAK1; this enhances kinase activity. Phosphorylated by PTK2B/PYK2; this enhances kinase activity. Upon activation of IL6ST by IL6, Tyr-419 is phosphorylated and Tyr-530 dephosphorylated. Post-translationally, displays reduced levels of autophosphorylation at Tyr-419 compared to isoforms 2 and 3. Displays enhanced levels of autophosphorylation at Tyr-419 compared to isoform 1. In terms of processing, displays enhanced levels of autophosphorylation at Tyr-419 compared to isoform 1. Shows reduced phosphorylation at Tyr-527 compared to isoforms 1 and 2. Post-translationally, S-nitrosylation is important for activation of its kinase activity. Ubiquitinated in response to CDK5-mediated phosphorylation. Ubiquitination mediated by CBLC requires SRC autophosphorylation at Tyr-419 and may lead to lysosomal degradation. Expressed ubiquitously. Expressed in the skin (at protein level). Platelets, neurons and osteoclasts express 5-fold to 200-fold higher levels than most other tissues. In terms of tissue distribution, expressed in spleen and liver. As to expression, expressed in brain.

The protein localises to the cell membrane. The protein resides in the mitochondrion inner membrane. Its subcellular location is the nucleus. It localises to the cytoplasm. It is found in the cytoskeleton. The protein localises to the perinuclear region. The protein resides in the cell junction. Its subcellular location is the focal adhesion. The catalysed reaction is L-tyrosyl-[protein] + ATP = O-phospho-L-tyrosyl-[protein] + ADP + H(+). With respect to regulation, phosphorylation by CSK at Tyr-530 inhibits kinase activity. Inhibitory phosphorylation at Tyr-530 is enhanced by heme. Further phosphorylation by CDK1 partially reactivates CSK-inactivated SRC and facilitates complete reactivation by protein tyrosine phosphatase PTPRC. Integrin engagement stimulates kinase activity. Phosphorylation by PTK2/FAK1 enhances kinase activity. Butein and pseudosubstrate-based peptide inhibitors like CIYKYYF act as inhibitors. Phosphorylation at Tyr-419 increases kinase activity. In terms of biological role, non-receptor protein tyrosine kinase which is activated following engagement of many different classes of cellular receptors including immune response receptors, integrins and other adhesion receptors, receptor protein tyrosine kinases, G protein-coupled receptors as well as cytokine receptors. Participates in signaling pathways that control a diverse spectrum of biological activities including gene transcription, immune response, cell adhesion, cell cycle progression, apoptosis, migration, and transformation. Due to functional redundancy between members of the SRC kinase family, identification of the specific role of each SRC kinase is very difficult. SRC appears to be one of the primary kinases activated following engagement of receptors and plays a role in the activation of other protein tyrosine kinase (PTK) families. Receptor clustering or dimerization leads to recruitment of SRC to the receptor complexes where it phosphorylates the tyrosine residues within the receptor cytoplasmic domains. Plays an important role in the regulation of cytoskeletal organization through phosphorylation of specific substrates such as AFAP1. Phosphorylation of AFAP1 allows the SRC SH2 domain to bind AFAP1 and to localize to actin filaments. Cytoskeletal reorganization is also controlled through the phosphorylation of cortactin (CTTN). When cells adhere via focal adhesions to the extracellular matrix, signals are transmitted by integrins into the cell resulting in tyrosine phosphorylation of a number of focal adhesion proteins, including PTK2/FAK1 and paxillin (PXN). In addition to phosphorylating focal adhesion proteins, SRC is also active at the sites of cell-cell contact adherens junctions and phosphorylates substrates such as beta-catenin (CTNNB1), delta-catenin (CTNND1), and plakoglobin (JUP). Another type of cell-cell junction, the gap junction, is also a target for SRC, which phosphorylates connexin-43 (GJA1). SRC is implicated in regulation of pre-mRNA-processing and phosphorylates RNA-binding proteins such as KHDRBS1. Phosphorylates PKP3 at 'Tyr-195' in response to reactive oxygen species, which may cause the release of PKP3 from desmosome cell junctions into the cytoplasm. Also plays a role in PDGF-mediated tyrosine phosphorylation of both STAT1 and STAT3, leading to increased DNA binding activity of these transcription factors. Involved in the RAS pathway through phosphorylation of RASA1 and RASGRF1. Plays a role in EGF-mediated calcium-activated chloride channel activation. Required for epidermal growth factor receptor (EGFR) internalization through phosphorylation of clathrin heavy chain (CLTC and CLTCL1) at 'Tyr-1477'. Involved in beta-arrestin (ARRB1 and ARRB2) desensitization through phosphorylation and activation of GRK2, leading to beta-arrestin phosphorylation and internalization. Has a critical role in the stimulation of the CDK20/MAPK3 mitogen-activated protein kinase cascade by epidermal growth factor. Might be involved not only in mediating the transduction of mitogenic signals at the level of the plasma membrane but also in controlling progression through the cell cycle via interaction with regulatory proteins in the nucleus. Plays an important role in osteoclastic bone resorption in conjunction with PTK2B/PYK2. Both the formation of a SRC-PTK2B/PYK2 complex and SRC kinase activity are necessary for this function. Recruited to activated integrins by PTK2B/PYK2, thereby phosphorylating CBL, which in turn induces the activation and recruitment of phosphatidylinositol 3-kinase to the cell membrane in a signaling pathway that is critical for osteoclast function. Promotes energy production in osteoclasts by activating mitochondrial cytochrome C oxidase. Phosphorylates DDR2 on tyrosine residues, thereby promoting its subsequent autophosphorylation. Phosphorylates RUNX3 and COX2 on tyrosine residues, TNK2 on 'Tyr-284' and CBL on 'Tyr-731'. Enhances RIGI-elicited antiviral signaling. Phosphorylates PDPK1 at 'Tyr-9', 'Tyr-373' and 'Tyr-376'. Phosphorylates BCAR1 at 'Tyr-128'. Phosphorylates CBLC at multiple tyrosine residues, phosphorylation at 'Tyr-341' activates CBLC E3 activity. Phosphorylates synaptic vesicle protein synaptophysin (SYP). Involved in anchorage-independent cell growth. Required for podosome formation. Mediates IL6 signaling by activating YAP1-NOTCH pathway to induce inflammation-induced epithelial regeneration. Phosphorylates OTUB1, promoting deubiquitination of RPTOR. Phosphorylates caspase CASP8 at 'Tyr-380' which negatively regulates CASP8 processing and activation, down-regulating CASP8 proapoptotic function. Non-receptor protein tyrosine kinase which phosphorylates synaptophysin with high affinity. Functionally, non-receptor protein tyrosine kinase which shows higher basal kinase activity than isoform 1, possibly due to weakened intramolecular interactions which enhance autophosphorylation of Tyr-419 and subsequent activation. The SH3 domain shows reduced affinity with the linker sequence between the SH2 and kinase domains which may account for the increased basal activity. Displays altered substrate specificity compared to isoform 1, showing weak affinity for synaptophysin and for peptide substrates containing class I or class II SH3 domain-binding motifs. Plays a role in L1CAM-mediated neurite elongation, possibly by acting downstream of L1CAM to drive cytoskeletal rearrangements involved in neurite outgrowth. Its function is as follows. Non-receptor protein tyrosine kinase which shows higher basal kinase activity than isoform 1, possibly due to weakened intramolecular interactions which enhance autophosphorylation of Tyr-419 and subsequent activation. The SH3 domain shows reduced affinity with the linker sequence between the SH2 and kinase domains which may account for the increased basal activity. Displays altered substrate specificity compared to isoform 1, showing weak affinity for synaptophysin and for peptide substrates containing class I or class II SH3 domain-binding motifs. Plays a role in neurite elongation. The chain is Proto-oncogene tyrosine-protein kinase Src from Homo sapiens (Human).